Consider the following 488-residue polypeptide: Glutamyl-tRNA(Gln) amidotransferase subunit B, mitochondrial (488 aa).

Belongs to the GatB/GatE family. GatB subfamily. In terms of assembly, subunit of the heterotrimeric GatFAB amidotransferase (AdT) complex, composed of A, B and F subunits.

The protein localises to the mitochondrion. The catalysed reaction is L-glutamyl-tRNA(Gln) + L-glutamine + ATP + H2O = L-glutaminyl-tRNA(Gln) + L-glutamate + ADP + phosphate + H(+). In terms of biological role, allows the formation of correctly charged Gln-tRNA(Gln) through the transamidation of misacylated Glu-tRNA(Gln) in the mitochondria. The reaction takes place in the presence of glutamine and ATP through an activated gamma-phospho-Glu-tRNA(Gln). The protein is Glutamyl-tRNA(Gln) amidotransferase subunit B, mitochondrial of Candida albicans (strain WO-1) (Yeast).